Here is an 873-residue protein sequence, read N- to C-terminus: MIKKFDKKDEESGSGSNPFQHLEKSAVLQEARIFNETPINPRRCLHILTKIIYLLNQGEHFGTTEATEAFFAMTRLFQSNDQTLRRMCYLTIKEMANISEDVIIVTSSLTKDMTGKEDVYRGPAIRALCRITDTTMLQAIERYMKQAIVDKVPSVSSSALVSSLHMVKMSFDVVKRWVNEAQEAASSDNIMVQYHALGLLYHLRKNDRLAVTKMLNKFTKSGLKSPFAYCMMIRIASKLLEETEGGHDSPLFDFIESCLRNKHEMVVYEAASAIVHMPNCTARELAPAVSVLQLFCSSPKAALRYAAVRTLNKVAMKHPSAVTACNLDLENLITDSNRSIATLAITTLLKTGSESSVDRLMKQISSFVSEISDEFKVVVVQAISALCQKYPRKHSVMMNFLSNMLRDDGGFEYKRAIVDCIISIIEENPESKETGLAHLCEFIEDCEHTVLATKILHLLGKEGPRTPTPSKYIRFIFNRVVLESEAVRAAAVSALAKFGAQNDDLLPSVLVLMQRCMMDSDDEVRDRATFYMNVLQQKQKALNAAYIFNGLSVSVLGLEKSLHQYTLEPSEKPFDMKTVPLATAPITEHKTEIAPVATSKLPEKLAPSRQDIYQEQLSAIPEFQGLGPLFKSSEPVQLTEAETEYVVRCIKHTFANHMIFQFDCTNTLNDQLLQKVLVQMEPSESYEVLHYVPAANLPYSQPGSCYSLVRLPEDDPTAVSCTFSCTMKYLVRDCDPNTGEPDDDGYDDEYVLEDLEVTVADHIQKVLKPNFAAAWDEVGDECEKEETFALATVRTLDEAVNNIVSFLGMQPCERSDKVPENKNSHVLFLAGVFRGGHDVLVRARLALADGVTIQVTVRSTDDNVVDVILASVG.

Residues 1–11 (MIKKFDKKDEE) show a composition bias toward basic and acidic residues. Residues 1–21 (MIKKFDKKDEESGSGSNPFQH) form a disordered region. 6 HEAT repeats span residues 64-101 (TEAT…ISED), 283-320 (RELA…KHPS), 321-355 (AVTA…GSES), 356-392 (SVDR…KYPR), 395-430 (SVMM…ENPE), and 467-504 (PTPS…QNDD).

Belongs to the COPG family. In terms of assembly, oligomeric complex.

The protein resides in the cytoplasm. The protein localises to the golgi apparatus membrane. Its subcellular location is the cytoplasmic vesicle. It localises to the COPI-coated vesicle membrane. Its function is as follows. The coatomer is a cytosolic protein complex that binds to dilysine motifs and reversibly associates with Golgi non-clathrin-coated vesicles, which further mediate biosynthetic protein transport from the ER, via the Golgi up to the trans Golgi network. Coatomer complex is required for budding from Golgi membranes, and is essential for the retrograde Golgi-to-ER transport of dilysine-tagged proteins. This Danio rerio (Zebrafish) protein is Coatomer subunit gamma-2 (copg2).